The sequence spans 637 residues: Probable ATP-binding protein YheS (637 aa).

ABC transporter domains lie at 2–246 and 313–527; these read IVFS…AQQQ and LKME…KQEN. ATP-binding positions include 34–41 and 345–352; these read GKNGCGKS and GRNGAGKS. The segment at 523–559 is disordered; it reads QKQENQTDEAPKENANSAQARKDQKRREAELRAQTQP. Over residues 542 to 553 the composition is skewed to basic and acidic residues; the sequence is ARKDQKRREAEL.

Belongs to the ABC transporter superfamily. ABCF family. YheS subfamily.

In terms of biological role, genetic data indicate it may be involved in ribosome assembly or function. In Escherichia coli O157:H7, this protein is Probable ATP-binding protein YheS (yheS).